The sequence spans 212 residues: Uracil phosphoribosyltransferase (212 aa).

5-phospho-alpha-D-ribose 1-diphosphate is bound by residues arginine 78, arginine 103, and 130 to 138; that span reads DPMLATGGS. Uracil-binding positions include isoleucine 193 and 198 to 200; that span reads GDA. Aspartate 199 contacts 5-phospho-alpha-D-ribose 1-diphosphate.

The protein belongs to the UPRTase family. It depends on Mg(2+) as a cofactor.

It carries out the reaction UMP + diphosphate = 5-phospho-alpha-D-ribose 1-diphosphate + uracil. Its pathway is pyrimidine metabolism; UMP biosynthesis via salvage pathway; UMP from uracil: step 1/1. Allosterically activated by GTP. Functionally, catalyzes the conversion of uracil and 5-phospho-alpha-D-ribose 1-diphosphate (PRPP) to UMP and diphosphate. The protein is Uracil phosphoribosyltransferase of Pseudomonas entomophila (strain L48).